The following is a 317-amino-acid chain: Dehydrogenase/reductase SDR family protein 7-like (317 aa).

The Cytoplasmic portion of the chain corresponds to 1–10 (MKNLAERSAG). Residues 11–31 (SLYWWLLATLFLPIAIPGLVL) traverse the membrane as a helical; Signal-anchor for type II membrane protein segment. Residues 32 to 317 (KLLTMMKEQR…KKRAEKLNST (286 aa)) are Peroxisomal-facing. Residue 52 to 76 (LITGASSGLGEALAHSFFLAGCKVV) coordinates NAD(+). Serine 189 contacts substrate. The active-site Proton acceptor is tyrosine 202.

The protein belongs to the short-chain dehydrogenases/reductases (SDR) family.

It localises to the peroxisome membrane. Its function is as follows. Putative oxidoreductase. The chain is Dehydrogenase/reductase SDR family protein 7-like from Anopheles gambiae (African malaria mosquito).